The following is a 263-amino-acid chain: tRNA (guanine-N(1)-)-methyltransferase (263 aa).

Residues Gly113 and 137 to 142 (LGDYVL) contribute to the S-adenosyl-L-methionine site.

This sequence belongs to the RNA methyltransferase TrmD family. As to quaternary structure, homodimer.

Its subcellular location is the cytoplasm. It catalyses the reaction guanosine(37) in tRNA + S-adenosyl-L-methionine = N(1)-methylguanosine(37) in tRNA + S-adenosyl-L-homocysteine + H(+). In terms of biological role, specifically methylates guanosine-37 in various tRNAs. The polypeptide is tRNA (guanine-N(1)-)-methyltransferase (Renibacterium salmoninarum (strain ATCC 33209 / DSM 20767 / JCM 11484 / NBRC 15589 / NCIMB 2235)).